The sequence spans 158 residues: S-ribosylhomocysteine lyase (158 aa).

Fe cation-binding residues include His55, His59, and Cys127.

This sequence belongs to the LuxS family. Homodimer. It depends on Fe cation as a cofactor.

It carries out the reaction S-(5-deoxy-D-ribos-5-yl)-L-homocysteine = (S)-4,5-dihydroxypentane-2,3-dione + L-homocysteine. Its function is as follows. Involved in the synthesis of autoinducer 2 (AI-2) which is secreted by bacteria and is used to communicate both the cell density and the metabolic potential of the environment. The regulation of gene expression in response to changes in cell density is called quorum sensing. Catalyzes the transformation of S-ribosylhomocysteine (RHC) to homocysteine (HC) and 4,5-dihydroxy-2,3-pentadione (DPD). The polypeptide is S-ribosylhomocysteine lyase (Geobacillus thermodenitrificans (strain NG80-2)).